A 148-amino-acid polypeptide reads, in one-letter code: Large ribosomal subunit protein cL37 (148 aa).

The N-terminal 65 residues, 1 to 65, are a transit peptide targeting the chloroplast; sequence MALLCFNSLP…SSHGRIVVKA (65 aa). Ala66 bears the N-acetylalanine mark. The tract at residues 125–148 is disordered; it reads LVRKRKMRKKGRWPPSKMKKNKNV.

This sequence belongs to the chloroplast-specific ribosomal protein cL37 family. As to quaternary structure, part of the 50S ribosomal subunit.

It is found in the plastid. Its subcellular location is the chloroplast. The chain is Large ribosomal subunit protein cL37 (PSRP5) from Arabidopsis thaliana (Mouse-ear cress).